Reading from the N-terminus, the 136-residue chain is Ribonuclease P protein component (136 aa).

It belongs to the RnpA family. As to quaternary structure, consists of a catalytic RNA component (M1 or rnpB) and a protein subunit.

The catalysed reaction is Endonucleolytic cleavage of RNA, removing 5'-extranucleotides from tRNA precursor.. RNaseP catalyzes the removal of the 5'-leader sequence from pre-tRNA to produce the mature 5'-terminus. It can also cleave other RNA substrates such as 4.5S RNA. The protein component plays an auxiliary but essential role in vivo by binding to the 5'-leader sequence and broadening the substrate specificity of the ribozyme. This chain is Ribonuclease P protein component, found in Burkholderia pseudomallei (strain 1106a).